The chain runs to 294 residues: Probable 2-(5''-triphosphoribosyl)-3'-dephosphocoenzyme-A synthase (294 aa).

Belongs to the CitG/MdcB family.

It carries out the reaction 3'-dephospho-CoA + ATP = 2'-(5''-triphospho-alpha-D-ribosyl)-3'-dephospho-CoA + adenine. In Streptococcus equi subsp. zooepidemicus (strain H70), this protein is Probable 2-(5''-triphosphoribosyl)-3'-dephosphocoenzyme-A synthase.